Consider the following 644-residue polypeptide: Threonine--tRNA ligase (644 aa).

Positions 1 to 62 (MSFSVTLPDG…DSDVEIAIIT (62 aa)) constitute a TGS domain. Residues 240–538 (DHRTIGRDLD…LTEIYKGAFP (299 aa)) form a catalytic region. Residues C334, H385, and H515 each coordinate Zn(2+).

Belongs to the class-II aminoacyl-tRNA synthetase family. Homodimer. Zn(2+) is required as a cofactor.

It is found in the cytoplasm. The catalysed reaction is tRNA(Thr) + L-threonine + ATP = L-threonyl-tRNA(Thr) + AMP + diphosphate + H(+). Its function is as follows. Catalyzes the attachment of threonine to tRNA(Thr) in a two-step reaction: L-threonine is first activated by ATP to form Thr-AMP and then transferred to the acceptor end of tRNA(Thr). Also edits incorrectly charged L-seryl-tRNA(Thr). In Lactobacillus acidophilus (strain ATCC 700396 / NCK56 / N2 / NCFM), this protein is Threonine--tRNA ligase.